The chain runs to 312 residues: tRNA uridine(34) hydroxylase (312 aa).

One can recognise a Rhodanese domain in the interval 123–217; that stretch reads SDPEVLLIDT…YLEEVPQEQS (95 aa). The Cysteine persulfide intermediate role is filled by cysteine 177. A compositionally biased stretch (basic and acidic residues) spans 282–293; the sequence is ARERQKQIELAR. A disordered region spans residues 282 to 312; that stretch reads ARERQKQIELARQRNQPHPLGRDPRQSTLEN.

This sequence belongs to the TrhO family.

It catalyses the reaction uridine(34) in tRNA + AH2 + O2 = 5-hydroxyuridine(34) in tRNA + A + H2O. Its function is as follows. Catalyzes oxygen-dependent 5-hydroxyuridine (ho5U) modification at position 34 in tRNAs. The protein is tRNA uridine(34) hydroxylase of Pseudomonas paraeruginosa (strain DSM 24068 / PA7) (Pseudomonas aeruginosa (strain PA7)).